Consider the following 259-residue polypeptide: V-type proton ATPase subunit D (259 aa).

A disordered region spans residues 214–259 (KLKEQEAAQRALEGPPKEEAGGTHSENQPPRNLLAVEEDNLPVLFN).

It belongs to the V-ATPase D subunit family. V-ATPase is a heteromultimeric enzyme made up of two complexes: the ATP-hydrolytic V1 complex and the proton translocation V0 complex. The V1 complex consists of three catalytic AB heterodimers that form a heterohexamer, three peripheral stalks each consisting of EG heterodimers, one central rotor including subunits D and F, and the regulatory subunits C and H. The proton translocation complex V0 consists of the proton transport subunit a, a ring of proteolipid subunits c9c'', rotary subunit d, and The proton translocation complex V0 consists of the proton transport subunit a, a ring of proteolipid subunits c9c'', rotary subunit d, subunits e and f, and the accessory subunits vah-19/Ac45 and vah-20/PRR.

Its function is as follows. Subunit of the V1 complex of vacuolar(H+)-ATPase (V-ATPase), a multisubunit enzyme composed of a peripheral complex (V1) that hydrolyzes ATP and a membrane integral complex (V0) that translocates protons. V-ATPase is responsible for acidifying and maintaining the pH of intracellular compartments and in some cell types, is targeted to the plasma membrane, where it is responsible for acidifying the extracellular environment. The sequence is that of V-type proton ATPase subunit D from Caenorhabditis briggsae.